Reading from the N-terminus, the 470-residue chain is Cysteine--tRNA ligase (470 aa).

C46 is a Zn(2+) binding site. Residues P48–N58 carry the 'HIGH' region motif. C230, H255, and E259 together coordinate Zn(2+). The 'KMSKS' region signature appears at K288–S292. Position 291 (K291) interacts with ATP.

Belongs to the class-I aminoacyl-tRNA synthetase family. In terms of assembly, monomer. Requires Zn(2+) as cofactor.

Its subcellular location is the cytoplasm. It carries out the reaction tRNA(Cys) + L-cysteine + ATP = L-cysteinyl-tRNA(Cys) + AMP + diphosphate. The chain is Cysteine--tRNA ligase from Granulibacter bethesdensis (strain ATCC BAA-1260 / CGDNIH1).